Consider the following 146-residue polypeptide: Basic phospholipase A2 (146 aa).

The N-terminal stretch at 1 to 21 (MYPAHLLVLLAVCVSLLGAAS) is a signal peptide. Positions 22 to 27 (IPPLPL) are excised as a propeptide. 7 disulfides stabilise this stretch: cysteine 38/cysteine 98, cysteine 54/cysteine 145, cysteine 56/cysteine 72, cysteine 71/cysteine 126, cysteine 78/cysteine 119, cysteine 87/cysteine 112, and cysteine 105/cysteine 117. 3 residues coordinate Ca(2+): tyrosine 55, glycine 57, and glycine 59. The active site involves histidine 75. Aspartate 76 contributes to the Ca(2+) binding site. The active site involves aspartate 120.

This sequence belongs to the phospholipase A2 family. Group I subfamily. D49 sub-subfamily. The cofactor is Ca(2+). In terms of tissue distribution, expressed by the venom gland.

It localises to the secreted. The enzyme catalyses a 1,2-diacyl-sn-glycero-3-phosphocholine + H2O = a 1-acyl-sn-glycero-3-phosphocholine + a fatty acid + H(+). Its function is as follows. Snake venom phospholipase A2 (PLA2) that inhibits neuromuscular transmission by blocking acetylcholine release from the nerve termini. PLA2 catalyzes the calcium-dependent hydrolysis of the 2-acyl groups in 3-sn-phosphoglycerides. This chain is Basic phospholipase A2, found in Hydrophis hardwickii (Hardwick's spine-bellied seasnake).